Reading from the N-terminus, the 26-residue chain is AMP deaminase 1 (26 aa).

This sequence belongs to the metallo-dependent hydrolases superfamily. Adenosine and AMP deaminases family. In terms of assembly, homotetramer.

The catalysed reaction is AMP + H2O + H(+) = IMP + NH4(+). Its pathway is purine metabolism; IMP biosynthesis via salvage pathway; IMP from AMP: step 1/1. In terms of biological role, AMP deaminase plays a critical role in energy metabolism. The protein is AMP deaminase 1 (AMPD1) of Gallus gallus (Chicken).